The sequence spans 921 residues: Protein translocase subunit SecA (921 aa).

ATP-binding positions include glutamine 87, 105–109 (GEGKT), and aspartate 516. Zn(2+) is bound by residues cysteine 905, cysteine 907, cysteine 916, and histidine 917.

This sequence belongs to the SecA family. In terms of assembly, monomer and homodimer. Part of the essential Sec protein translocation apparatus which comprises SecA, SecYEG and auxiliary proteins SecDF-YajC and YidC. Requires Zn(2+) as cofactor.

The protein resides in the cell inner membrane. The protein localises to the cytoplasm. It catalyses the reaction ATP + H2O + cellular proteinSide 1 = ADP + phosphate + cellular proteinSide 2.. Part of the Sec protein translocase complex. Interacts with the SecYEG preprotein conducting channel. Has a central role in coupling the hydrolysis of ATP to the transfer of proteins into and across the cell membrane, serving both as a receptor for the preprotein-SecB complex and as an ATP-driven molecular motor driving the stepwise translocation of polypeptide chains across the membrane. The chain is Protein translocase subunit SecA from Polaromonas sp. (strain JS666 / ATCC BAA-500).